A 1434-amino-acid chain; its full sequence is Nitric oxide synthase 1 (1434 aa).

The interaction with NOSIP stretch occupies residues 1–205 (MEDHMFGVQQ…LQGRGENNEL (205 aa)). The region spanning 17–99 (SVRLFKRKVG…ETHVVLILRG (83 aa)) is the PDZ domain. Disordered regions lie at residues 112 to 192 (TGDG…KKAT) and 276 to 302 (NNPY…PSKC). Residues 163–245 (YDDGQEAGSL…MGIQVDRDLD (83 aa)) form an interaction with DYNLL1/PIN region. Over residues 285–299 (PPTSGKQSPTKNGSP) the composition is skewed to polar residues. Ser339 is a binding site for (6R)-L-erythro-5,6,7,8-tetrahydrobiopterin. Cys420 is a binding site for heme b. L-arginine-binding residues include Gln483, Trp592, Tyr593, and Glu597. (6R)-L-erythro-5,6,7,8-tetrahydrobiopterin is bound by residues Val682, Trp683, and Phe696. A heme b-binding site is contributed by Tyr711. Residues 730 to 750 (KRRAIGFKKLAEAVKFSAKLM) are calmodulin-binding. A Flavodoxin-like domain is found at 760 to 940 (ATILYATETG…AFRTWAKKVF (181 aa)). Residues Thr766, Glu767, Thr768, Lys770, Ser771, Ser812, Thr813, and Gly817 each coordinate FMN. Residues Ser852, Ser862, and Ser863 each carry the phosphoserine modification. 5 residues coordinate FMN: Ser891, His896, Cys898, Glu924, and Gln928. Residues 995–1242 (KRVSAARLLS…VRGAPSFHLP (248 aa)) form the FAD-binding FR-type domain. An NADP(+)-binding site is contributed by Arg1015. The FAD site is built by His1037, Arg1178, Tyr1179, Tyr1180, Ser1181, Thr1196, and Ala1198. NADP(+) is bound at residue Ser1201. The FAD site is built by Tyr1202, Val1215, Cys1216, and Ser1217. Residues Thr1256, Arg1289, Ser1318, Arg1319, Lys1325, Tyr1327, Gln1329, Asp1362, Thr1403, and Arg1405 each coordinate NADP(+).

It belongs to the NOS family. In terms of assembly, homodimer. Interacts with DLG4; the interaction possibly being prevented by the association between NOS1 and CAPON. Forms a ternary complex with CAPON and RASD1. Forms a ternary complex with CAPON and SYN1. Interacts with ZDHHC23. Interacts with NOSIP; which may impair its synaptic location. Interacts with HTR4. Interacts with SLC6A4. Interacts with VAC14. Interacts (via N-terminal domain) with DLG4 (via N-terminal tandem pair of PDZ domains). Interacts with SLC6A4. Forms a complex with ASL, ASS1 and SLC7A1; the complex regulates cell-autonomous L-arginine synthesis and citrulline recycling while channeling extracellular L-arginine to nitric oxide synthesis pathway. Interacts with DMD; localizes NOS1 to sarcolemma in muscle cells. Interacts with DYNLL1; inhibits the nitric oxide synthase activity. Heme b serves as cofactor. The cofactor is FAD. It depends on FMN as a cofactor. (6R)-L-erythro-5,6,7,8-tetrahydrobiopterin is required as a cofactor. Ubiquitinated; mediated by STUB1/CHIP in the presence of Hsp70 and Hsp40 (in vitro). As to expression, isoform 1 is ubiquitously expressed: detected in skeletal muscle and brain, also in testis, lung and kidney, and at low levels in heart, adrenal gland and retina. Not detected in the platelets. Isoform 3 is expressed only in testis. Isoform 4 is detected in testis, skeletal muscle, lung, and kidney, at low levels in the brain, but not in the heart and adrenal gland.

It localises to the cell membrane. It is found in the sarcolemma. The protein localises to the cell projection. The protein resides in the dendritic spine. The catalysed reaction is 2 L-arginine + 3 NADPH + 4 O2 + H(+) = 2 L-citrulline + 2 nitric oxide + 3 NADP(+) + 4 H2O. Its activity is regulated as follows. Stimulated by calcium/calmodulin. Inhibited by DYNLL1 that prevents the dimerization of the protein. Inhibited by NOSIP. Its function is as follows. Produces nitric oxide (NO) which is a messenger molecule with diverse functions throughout the body. In the brain and peripheral nervous system, NO displays many properties of a neurotransmitter. Probably has nitrosylase activity and mediates cysteine S-nitrosylation of cytoplasmic target proteins such SRR. The polypeptide is Nitric oxide synthase 1 (Homo sapiens (Human)).